We begin with the raw amino-acid sequence, 890 residues long: Inter-alpha-trypsin inhibitor heavy chain H3 (890 aa).

The signal sequence occupies residues 1 to 20; sequence MAFAWWPCLILALLSSLAAS. The propeptide occupies 21 to 34; it reads GFPRSPFRLLGKRS. The VIT domain occupies 29-158; it reads LLGKRSLPEG…KVTFELTYEE (130 aa). An N-linked (GlcNAc...) asparagine glycan is attached at asparagine 91. Residues 284 to 467 form the VWFA domain; the sequence is NVAFVIDISG…LQLQGFYEEV (184 aa). Asparagine 580 carries N-linked (GlcNAc...) asparagine glycosylation. An Aspartate 1-(chondroitin 4-sulfate)-ester modification is found at aspartate 651. Positions 652-890 are excised as a propeptide; it reads PHFIIQIPEK…HTDYIVPNLF (239 aa).

This sequence belongs to the ITIH family. I-alpha-I plasma protease inhibitors are assembled from one or two heavy chains (HC) and one light chain, bikunin. Pre-alpha-inhibitor (P-alpha-I) is composed of ITIH3/HC3 and bikunin. Heavy chains are linked to bikunin via chondroitin 4-sulfate esterified to the alpha-carboxyl of the C-terminal aspartate after propeptide cleavage.

It is found in the secreted. In terms of biological role, may act as a carrier of hyaluronan in serum or as a binding protein between hyaluronan and other matrix protein, including those on cell surfaces in tissues to regulate the localization, synthesis and degradation of hyaluronan which are essential to cells undergoing biological processes. The chain is Inter-alpha-trypsin inhibitor heavy chain H3 (ITIH3) from Homo sapiens (Human).